The chain runs to 388 residues: MNLHEYQAKQLFAEYGLPVSEGYACATPQEAAEAADKIGGNTWVVKCQVHAGGRGKAGGVKLAKSKDEIRAFAQNWLGKNLVTYQTDANGQPVTKILVESCTDIAKELYLGAVVDRGSRRVVFMASTEGGVEIEKVAHETPELIHKAALDPLVGPQPYQARELAFKLGLVGEQIKQFTKIFMGLGQMFLDCDFALLEINPLVITAQGNLHCLDGKINIDANALYRQPKLRQMHDPSQDDPREAHAAQWELNYVALDGNIGCMVNGAGLAMGTMDIVNLHGGSPANFLDVGGGATKERVTEAFKIILSDSKVQAVLVNIFGGIVRCDMIAEGIIGAVKEVGVKVPVVVRLEGNNAELGARKLADSGLNIIAATSLTDAAQQVVKAAEAK.

The 236-residue stretch at Lys9–His244 folds into the ATP-grasp domain. Residues Lys46, Gly53 to Gly55, Glu99, Thr102, and Glu107 each bind ATP. The Mg(2+) site is built by Asn199 and Asp213. Substrate contacts are provided by residues Asn264 and Gly321–Val323.

Belongs to the succinate/malate CoA ligase beta subunit family. As to quaternary structure, heterotetramer of two alpha and two beta subunits. The cofactor is Mg(2+).

It carries out the reaction succinate + ATP + CoA = succinyl-CoA + ADP + phosphate. The enzyme catalyses GTP + succinate + CoA = succinyl-CoA + GDP + phosphate. It functions in the pathway carbohydrate metabolism; tricarboxylic acid cycle; succinate from succinyl-CoA (ligase route): step 1/1. Functionally, succinyl-CoA synthetase functions in the citric acid cycle (TCA), coupling the hydrolysis of succinyl-CoA to the synthesis of either ATP or GTP and thus represents the only step of substrate-level phosphorylation in the TCA. The beta subunit provides nucleotide specificity of the enzyme and binds the substrate succinate, while the binding sites for coenzyme A and phosphate are found in the alpha subunit. This is Succinate--CoA ligase [ADP-forming] subunit beta from Aeromonas hydrophila subsp. hydrophila (strain ATCC 7966 / DSM 30187 / BCRC 13018 / CCUG 14551 / JCM 1027 / KCTC 2358 / NCIMB 9240 / NCTC 8049).